Here is a 164-residue protein sequence, read N- to C-terminus: CB1 cannabinoid receptor-interacting protein 1 (164 aa).

The protein belongs to the CNRIP family. As to quaternary structure, interacts with the cannabinoid receptor CNR1 (via C-terminus). Does not interact with cannabinoid receptor CNR2.

In terms of biological role, suppresses cannabinoid receptor CNR1-mediated tonic inhibition of voltage-gated calcium channels. Functionally, does not suppress cannabinoid receptor CNR1-mediated tonic inhibition of voltage-gated calcium channels. This Homo sapiens (Human) protein is CB1 cannabinoid receptor-interacting protein 1 (CNRIP1).